A 131-amino-acid chain; its full sequence is Small ribosomal subunit protein uS8 (131 aa).

This sequence belongs to the universal ribosomal protein uS8 family. In terms of assembly, part of the 30S ribosomal subunit. Contacts proteins S5 and S12.

In terms of biological role, one of the primary rRNA binding proteins, it binds directly to 16S rRNA central domain where it helps coordinate assembly of the platform of the 30S subunit. This is Small ribosomal subunit protein uS8 from Campylobacter lari (strain RM2100 / D67 / ATCC BAA-1060).